We begin with the raw amino-acid sequence, 79 residues long: Protein SNA2 (79 aa).

Residues 1-6 lie on the Cytoplasmic side of the membrane; the sequence is MHARDW. The helical transmembrane segment at 7–27 threads the bilayer; the sequence is FLVFIAIFIPPLAVWLKRGFF. Residues 28 to 32 lie on the Vesicular side of the membrane; that stretch reads TKDLL. A helical transmembrane segment spans residues 33–53; sequence INFLLFLLGFFPGLIHALYVI. The Cytoplasmic segment spans residues 54 to 79; the sequence is SCHPYEENEARYSHLSSSDDNYGSLA. Residues Ser-71 and Ser-77 each carry the phosphoserine modification.

Belongs to the UPF0057 (PMP3) family.

The protein resides in the membrane. Its subcellular location is the lipid droplet. In Saccharomyces cerevisiae (strain ATCC 204508 / S288c) (Baker's yeast), this protein is Protein SNA2 (SNA2).